We begin with the raw amino-acid sequence, 209 residues long: Transmembrane 4 L6 family member 19 (209 aa).

The Cytoplasmic portion of the chain corresponds to 1-16; it reads MVSSPCTQASSRTCSR. A helical membrane pass occupies residues 17 to 37; sequence ILGLSLGTAALFAAGANVALL. The Extracellular segment spans residues 38 to 59; sequence LPNWDVTYLLRGLLGRHAMLGT. A helical membrane pass occupies residues 60 to 80; the sequence is GLWGGGLMVLTAAILISLMGW. At 81–93 the chain is on the cytoplasmic side; that stretch reads RYGCFSKSGLCRS. A helical membrane pass occupies residues 94-114; the sequence is VLTALLSGGLALLGALICFVT. At 115-175 the chain is on the extracellular side; it reads SGVALKDGPF…PSAAVVWHVS (61 aa). Asn133 carries N-linked (GlcNAc...) asparagine glycosylation. The helical transmembrane segment at 176–196 threads the bilayer; sequence LFSALLCISLLQLLLVVVHVI. Residues 186–196 form an important for homodimerization region; that stretch reads LQLLLVVVHVI. The Cytoplasmic segment spans residues 197-209; the sequence is NSLLGLFCSLCEK.

The protein belongs to the L6 tetraspanin family. In terms of assembly, may form homodimers and homooligomers. Interacts with integrins ITGAV and ITGB3. Interacts with components of members of the V0 complex of vacuolar(H+)-ATPase (V-ATPase), including ATP6V0B and ATP6V0D2; this interaction inhibits V1-V0 complex assembly. As to expression, in adipose tissue, expressed by macrophages.

The protein resides in the lysosome membrane. It is found in the cytoplasm. Its subcellular location is the cytoskeleton. It localises to the cell projection. The protein localises to the filopodium. In terms of biological role, negatively regulates vacuolar (H+)-ATPase (V-ATPase) activity by interacting with members of V-ATPase V0 complex and hence inhibiting V1-V0 complex assembly. Required for multinucleation during osteoclast differentiation. In Homo sapiens (Human), this protein is Transmembrane 4 L6 family member 19 (TM4SF19).